The sequence spans 388 residues: Purple acid phosphatase 19 (388 aa).

The signal sequence occupies residues 1-24; that stretch reads MGLNHLTLVCSAIALLSIFVVSQA. N-linked (GlcNAc...) asparagine glycans are attached at residues Asn-97 and Asn-111. Residues Asp-145 and Tyr-148 each contribute to the Fe cation site. Asp-145 provides a ligand contact to Zn(2+). Zn(2+) is bound at residue Asn-182. Asn-182 provides a ligand contact to substrate. The N-linked (GlcNAc...) asparagine glycan is linked to Asn-226. His-238 contributes to the Zn(2+) binding site. His-248 functions as the Proton donor in the catalytic mechanism. His-275 lines the Zn(2+) pocket. Residue 275 to 277 coordinates substrate; it reads HVH. His-277 contacts Fe cation. N-linked (GlcNAc...) asparagine glycans are attached at residues Asn-291 and Asn-348.

The protein belongs to the metallophosphoesterase superfamily. Purple acid phosphatase family. Homodimer. The cofactor is Fe cation. Requires Zn(2+) as cofactor. In terms of tissue distribution, specifically expressed in flowers.

Its subcellular location is the secreted. The enzyme catalyses a phosphate monoester + H2O = an alcohol + phosphate. In Arabidopsis thaliana (Mouse-ear cress), this protein is Purple acid phosphatase 19 (PAP19).